The sequence spans 340 residues: Glycerol-3-phosphate dehydrogenase [NAD(P)+] (340 aa).

Positions 14, 15, 35, and 109 each coordinate NADPH. Positions 109 and 137 each coordinate sn-glycerol 3-phosphate. Residue Ala141 participates in NADPH binding. Lys192, Asp245, Ser255, Arg256, and Asn257 together coordinate sn-glycerol 3-phosphate. The active-site Proton acceptor is Lys192. Arg256 serves as a coordination point for NADPH. The NADPH site is built by Val280 and Glu282.

Belongs to the NAD-dependent glycerol-3-phosphate dehydrogenase family.

It is found in the cytoplasm. It carries out the reaction sn-glycerol 3-phosphate + NAD(+) = dihydroxyacetone phosphate + NADH + H(+). The catalysed reaction is sn-glycerol 3-phosphate + NADP(+) = dihydroxyacetone phosphate + NADPH + H(+). Its pathway is membrane lipid metabolism; glycerophospholipid metabolism. Functionally, catalyzes the reduction of the glycolytic intermediate dihydroxyacetone phosphate (DHAP) to sn-glycerol 3-phosphate (G3P), the key precursor for phospholipid synthesis. This is Glycerol-3-phosphate dehydrogenase [NAD(P)+] from Teredinibacter turnerae (strain ATCC 39867 / T7901).